The following is a 524-amino-acid chain: Cytochrome P450 monooxygenase ankB (524 aa).

Residues Phe-22–Phe-42 traverse the membrane as a helical segment. A heme-binding site is contributed by Cys-466.

It belongs to the cytochrome P450 family. Requires heme as cofactor.

The protein localises to the membrane. The catalysed reaction is cyclo(L-arginyl-tyrosyl) + reduced [NADPH--hemoprotein reductase] + O2 = cyclo(L-arginyl-L-dehydrotyrosyl) + oxidized [NADPH--hemoprotein reductase] + 2 H2O + H(+). The protein operates within alkaloid biosynthesis. Functionally, cytochrome P450 monooxygenase; part of the ank cluster that mediates the biosynthesis of NK13650 C, a highly modified cyclo-arginine-tyrosine dipeptide. AnkB is responsible for desaturation of the ankA product cyclo-Arg-Tyr diketopiperazine, likely through hydroxylation of the benzylic position followed by dehydration to yield a dehydro-cyclodipeptide. Within the pathway, the cyclodipeptide synthase ankA acts as the scaffold-generating enzyme and is responsible for formation of the cyclo-Arg-Tyr diketopiperazine (cRY) from L-Arg and L-Tyr. The ankA product cRY is desaturated by the cytochrome P450 monooxygenase ankB to yield a dehydro-cyclodipeptide intermediate. The FAD-dependent monooxygenase ankC then installs the m-OH, ankD catalyzes the attachment of L-homoserine, and ankE ligates citrate to the ankD product to yield NK13650 B. The O-methyltransferase ankF is responsible for methylation of the C-17 phenol group of NK13650 B to produce NK13650 D. Amidation of NK13650 D with L-Asp by ankG then leads to the production of NK13650 C, whereas amidation of NK13650 B produces NK13650 A. In Aspergillus thermomutatus (Neosartorya pseudofischeri), this protein is Cytochrome P450 monooxygenase ankB.